We begin with the raw amino-acid sequence, 344 residues long: KRR1 small subunit processome component homolog (344 aa).

In terms of domain architecture, KH spans 125-193 (DIIKIGNLVH…VRDIVLETMN (69 aa)). Residues 232 to 245 (NISKRKQPKVKKQK) show a composition bias toward basic residues. Disordered stretches follow at residues 232 to 260 (NISK…ESKV) and 273 to 326 (QEQK…TKVD). Residues 270–295 (FLNQEQKQAKRNQGRTEKQKEAAKRQ) adopt a coiled-coil conformation. 2 stretches are compositionally biased toward basic and acidic residues: residues 283–302 (GRTE…RNKD) and 315–326 (RKKEDGSSTKVD).

It belongs to the KRR1 family. As to quaternary structure, monomer. Component of the ribosomal small subunit (SSU) processome.

The protein resides in the nucleus. Its subcellular location is the nucleolus. Functionally, required for 40S ribosome biogenesis. Involved in nucleolar processing of pre-18S ribosomal RNA and ribosome assembly. Binds to RNA. Required for female germline development, cell viability during eye development and for survival of dividing cells and epithelial cells during early wing disk development. The sequence is that of KRR1 small subunit processome component homolog from Drosophila yakuba (Fruit fly).